Reading from the N-terminus, the 374-residue chain is Aminomethyltransferase (374 aa).

This sequence belongs to the GcvT family. In terms of assembly, the glycine cleavage system is composed of four proteins: P, T, L and H.

The catalysed reaction is N(6)-[(R)-S(8)-aminomethyldihydrolipoyl]-L-lysyl-[protein] + (6S)-5,6,7,8-tetrahydrofolate = N(6)-[(R)-dihydrolipoyl]-L-lysyl-[protein] + (6R)-5,10-methylene-5,6,7,8-tetrahydrofolate + NH4(+). Functionally, the glycine cleavage system catalyzes the degradation of glycine. The protein is Aminomethyltransferase of Prochlorococcus marinus (strain MIT 9313).